A 298-amino-acid polypeptide reads, in one-letter code: Anamorsin homolog (298 aa).

The N-terminal SAM-like domain stretch occupies residues 1-143 (MTQLIITYQS…IKAEKPSWKP (143 aa)). A linker region spans residues 143 to 162 (PEEGKVLVDDIDLEGSVPDI). Cys-175, Cys-182, Cys-185, and Cys-187 together coordinate [2Fe-2S] cluster. Positions 175–187 (CKSKERACNNCNC) are fe-S binding site A. [4Fe-4S] cluster-binding residues include Cys-218, Cys-221, Cys-229, and Cys-232. 2 consecutive short sequence motifs (cx2C motif) follow at residues 218–221 (CGNC) and 229–232 (CSGC). Positions 218-232 (CGNCYLGDAFRCSGC) are fe-S binding site B.

It belongs to the anamorsin family. As to quaternary structure, monomer. Requires [2Fe-2S] cluster as cofactor. [4Fe-4S] cluster is required as a cofactor.

The protein resides in the cytoplasm. Its subcellular location is the mitochondrion intermembrane space. Component of the cytosolic iron-sulfur (Fe-S) protein assembly (CIA) machinery. Required for the maturation of extramitochondrial Fe-S proteins. Part of an electron transfer chain functioning in an early step of cytosolic Fe-S biogenesis, facilitating the de novo assembly of a [4Fe-4S] cluster on the cytosolic Fe-S scaffold complex. Electrons are transferred from NADPH via a FAD- and FMN-containing diflavin oxidoreductase. Together with the diflavin oxidoreductase, also required for the assembly of the diferric tyrosyl radical cofactor of ribonucleotide reductase (RNR), probably by providing electrons for reduction during radical cofactor maturation in the catalytic small subunit. The polypeptide is Anamorsin homolog (Cryptosporidium hominis).